We begin with the raw amino-acid sequence, 1470 residues long: Rap guanine nucleotide exchange factor (1470 aa).

2 disordered regions span residues 130–227 (PTEP…SYND) and 250–313 (HRRE…GGFM). Over residues 173–183 (MPPPPVPPRPL) the composition is skewed to pro residues. Composition is skewed to low complexity over residues 184-193 (RLPQTAAKGP) and 215-224 (TTSSSSSNTS). The span at 256-266 (NSVGGQAQNGI) shows a compositional bias: polar residues. A compositionally biased stretch (low complexity) spans 275 to 292 (RSTASSTTTEGETASNEG). Position 347–463 (347–463 (AFAALPMSIK…IEKDRDGLTG (117 aa))) interacts with a nucleoside 3',5'-cyclic phosphate. The 115-residue stretch at 478–592 (CGQVLIKGKP…SLLNIACSVK (115 aa)) folds into the N-terminal Ras-GEF domain. The region spanning 597–679 (QVILTRRKDD…LTLMLKNNVL (83 aa)) is the PDZ domain. In terms of domain architecture, Ras-associating spans 782–869 (PEHVLKIYRN…SRYYLKNNSR (88 aa)). Residues 894 to 1124 (NAQVVAAQLT…FENSNVATMR (231 aa)) enclose the Ras-GEF domain. A compositionally biased stretch (polar residues) spans 1176 to 1189 (QTAHRGANSSSTAN). 4 disordered regions span residues 1176 to 1213 (QTAH…DQSS), 1253 to 1326 (KVKG…NIPP), 1347 to 1370 (VIPT…PASS), and 1422 to 1455 (ATLP…RMGT). Residues 1198–1211 (PSSLSSQSAGSADQ) are compositionally biased toward low complexity. 2 stretches are compositionally biased toward polar residues: residues 1260-1274 (QITS…SLQR) and 1282-1308 (RQAT…YQSD). Residues 1309 to 1321 (NGRRQRSGSEGRF) are compositionally biased toward basic and acidic residues. The span at 1349 to 1370 (PTHPHGHSPTSPRCRSRSPASS) shows a compositional bias: low complexity.

Belongs to the RAPGEF2 family. In terms of tissue distribution, expressed in hermaphrodite-specific neurons (HSNs), oviduct sheath cells and lateral seam cells.

Acts as a guanine nucleotide exchange factor for small G protein GTPases like rap-1 and rap-2. Required in the hypodermis, especially in the seam cells, for proper formation of the cuticle. This chain is Rap guanine nucleotide exchange factor (pxf-1), found in Caenorhabditis elegans.